The following is an 879-amino-acid chain: MGRLASRPLLLALLSLALCRGRVVRVPTATLVRVVGTELVIPCNVSDYDGPSEQNFDWSFSSLGSSFVELASTWEVGFPAQLYQERLQRGEILLRRTANDAVELHIKNVQPSDQGHYKCSTPSTDATVQGNYEDTVQVKVLADSLHVGPSARPPPSLSLREGEPFELRCTAASASPLHTHLALLWEVHRGPARRSVLALTHEGRFHPGLGYEQRYHSGDVRLDTVGSDAYRLSVSRALSADQGSYRCIVSEWIAEQGNWQEIQEKAVEVATVVIQPSVLRAAVPKNVSVAEGKELDLTCNITTDRADDVRPEVTWSFSRMPDSTLPGSRVLARLDRDSLVHSSPHVALSHVDARSYHLLVRDVSKENSGYYYCHVSLWAPGHNRSWHKVAEAVSSPAGVGVTWLEPDYQVYLNASKVPGFADDPTELACRVVDTKSGEANVRFTVSWYYRMNRRSDNVVTSELLAVMDGDWTLKYGERSKQRAQDGDFIFSKEHTDTFNFRIQRTTEEDRGNYYCVVSAWTKQRNNSWVKSKDVFSKPVNIFWALEDSVLVVKARQPKPFFAAGNTFEMTCKVSSKNIKSPRYSVLIMAEKPVGDLSSPNETKYIISLDQDSVVKLENWTDASRVDGVVLEKVQEDEFRYRMYQTQVSDAGLYRCMVTAWSPVRGSLWREAATSLSNPIEIDFQTSGPIFNASVHSDTPSVIRGDLIKLFCIITVEGAALDPDDMAFDVSWFAVHSFGLDKAPVLLSSLDRKGIVTTSRRDWKSDLSLERVSVLEFLLQVHGSEDQDFGNYYCSVTPWVKSPTGSWQKEAEIHSKPVFITVKMDVLNAFKYPLLIGVGLSTVIGLLSCLIGYCSSHWCCKKEVQETRRERRRLMSMEMD.

The N-terminal stretch at 1–25 is a signal peptide; it reads MGRLASRPLLLALLSLALCRGRVVR. Ig-like C2-type domains lie at 26 to 129 and 149 to 268; these read VPTA…ATVQ and PSAR…KAVE. Topologically, residues 26–832 are extracellular; it reads VPTATLVRVV…MDVLNAFKYP (807 aa). Disulfide bonds link Cys-43/Cys-119 and Cys-169/Cys-247. Asn-44 carries N-linked (GlcNAc...) asparagine glycosylation. Thr-271 is subject to Phosphothreonine. Ig-like C2-type domains are found at residues 276–394, 406–536, 544–662, and 688–813; these read PSVL…EAVS, PDYQ…DVFS, ALED…AWSP, and PIFN…AEIH. Residues Asn-286, Asn-300, Asn-383, and Asn-413 are each glycosylated (N-linked (GlcNAc...) asparagine). A disulfide bond links Cys-299 and Cys-373. Positions 424–427 match the Endoplasmic reticulum retention signal motif; the sequence is PTEL. A disulfide bond links Cys-429 and Cys-515. 4 N-linked (GlcNAc...) asparagine glycosylation sites follow: Asn-525, Asn-600, Asn-618, and Asn-691. A disulfide bridge links Cys-571 with Cys-655. A Cell attachment site motif is present at residues 703–705; the sequence is RGD. An intrachain disulfide couples Cys-711 to Cys-793. The helical transmembrane segment at 833–853 threads the bilayer; that stretch reads LLIGVGLSTVIGLLSCLIGYC. At 854-879 the chain is on the cytoplasmic side; sequence SSHWCCKKEVQETRRERRRLMSMEMD.

In terms of assembly, interacts with CD9 and CD81. Part of a complex composed of CD9, CD81 and IGSF8. Also seems to interact with CD63, CD82 and CD151.

It is found in the endoplasmic reticulum membrane. The protein localises to the golgi apparatus. Its subcellular location is the trans-Golgi network membrane. Inhibits the binding of prostaglandin F2-alpha (PGF2-alpha) to its specific FP receptor, by decreasing the receptor number rather than the affinity constant. Functional coupling with the prostaglandin F2-alpha receptor seems to occur. In myoblasts, associates with tetraspanins CD9 and CD81 to prevent myotube fusion during muscle regeneration. This Homo sapiens (Human) protein is Prostaglandin F2 receptor negative regulator (PTGFRN).